A 470-amino-acid polypeptide reads, in one-letter code: Aminoacyl transferase sphA (470 aa).

3 residues coordinate pyridoxal 5'-phosphate: serine 212, histidine 244, and threonine 272. At lysine 275 the chain carries N6-(pyridoxal phosphate)lysine.

The protein belongs to the class-II pyridoxal-phosphate-dependent aminotransferase family. BioF subfamily. As to quaternary structure, homodimer. Requires pyridoxal 5'-phosphate as cofactor.

It functions in the pathway secondary metabolite biosynthesis. Its function is as follows. Aminoacyl transferase; part of the gene cluster that mediates the biosynthesis of sphingofungins, bioactive molecules acting as sphingolipid inhibitors via inhibiting serine palmitoyl transferase (SPT). Within the pathway, sphA transfers 2-methyl-aminomalonate and 2-hydroxymethyl-aminomalonate onto the sphB product 3-hydroxyoctadeca-4,10-dienoyl-ACP to produce the precursors of sphingofungins E and F. The substrate specificity of sphA using 2-methyl-aminomalonate and 2-hydroxymethyl-aminomalonate instread of aminomalonate is responsible for the biosynthesis of sphingofungins E and F but not B and C like in Aspergillus fumigatus. The PKS sphB does not contain any putative thioesterase domain for releasing the nascent polyketide chain and it has been suggested that aminoacyl transferases can facilitate the polyketide chain release. The sequence is that of Aminoacyl transferase sphA from Byssochlamys spectabilis (Paecilomyces variotii).